The following is a 109-amino-acid chain: Cell division suppressor protein YneA (109 aa).

A LysM domain is found at 39–90 (SEVNVSEGDSLWALADQYAGKSDMAKADFVSWVEKENNLADGHVEAGDSVVI).

The protein belongs to the YneA family.

The protein resides in the cytoplasm. Inhibits cell division during the SOS response. Affects a later stage of the cell division protein assembly, after the assembly of the Z ring, by probably suppressing recruitment of FtsL and/or DivIC to the division machinery. In Listeria monocytogenes serotype 4b (strain CLIP80459), this protein is Cell division suppressor protein YneA.